We begin with the raw amino-acid sequence, 121 residues long: Basic phospholipase A2 homolog piratoxin-2 (121 aa).

7 cysteine pairs are disulfide-bonded: Cys26–Cys115, Cys28–Cys44, Cys43–Cys95, Cys49–Cys121, Cys50–Cys88, Cys57–Cys81, and Cys75–Cys86. Positions 105-117 (KKYRYHLKPFCKK) are important for membrane-damaging activities in eukaryotes and bacteria; heparin-binding.

Belongs to the phospholipase A2 family. Group II subfamily. K49 sub-subfamily. As to quaternary structure, homodimer; non-covalently linked. As to expression, expressed by the venom gland.

The protein resides in the secreted. Snake venom phospholipase A2 (PLA2) homolog that lacks enzymatic activity. Shows myotoxic activity and edema-inducing activities in vivo. A model of myotoxic mechanism has been proposed: an apo Lys49-PLA2 is activated by the entrance of a hydrophobic molecule (e.g. fatty acid) at the hydrophobic channel of the protein leading to a reorientation of a monomer. This reorientation causes a transition between 'inactive' to 'active' states, causing alignment of C-terminal and membrane-docking sites (MDoS) side-by-side and putting the membrane-disruption sites (MDiS) in the same plane, exposed to solvent and in a symmetric position for both monomers. The MDoS region stabilizes the toxin on membrane by the interaction of charged residues with phospholipid head groups. Subsequently, the MDiS region destabilizes the membrane with penetration of hydrophobic residues. This insertion causes a disorganization of the membrane, allowing an uncontrolled influx of ions (i.e. calcium and sodium), and eventually triggering irreversible intracellular alterations and cell death. In Bothrops pirajai (Piraja's lancehead), this protein is Basic phospholipase A2 homolog piratoxin-2.